Consider the following 500-residue polypeptide: Lycopene beta cyclase, chloroplastic (500 aa).

A chloroplast-targeting transit peptide spans 1-81 (MDTLLKTPNK…ELPMYDPSKG (81 aa)). 86 to 114 (LAVVGGGPAGLAVAQQVSEAGLSVVSIDP) contacts NAD(+).

It belongs to the lycopene cyclase family.

The protein localises to the plastid. It is found in the chloroplast. It catalyses the reaction a carotenoid psi-end group = a carotenoid beta-end derivative. It participates in carotenoid biosynthesis; beta-carotene biosynthesis. The protein operates within carotenoid biosynthesis; beta-zeacarotene biosynthesis. Its function is as follows. Catalyzes the double cyclization reaction which converts lycopene to beta-carotene and neurosporene to beta-zeacarotene. The sequence is that of Lycopene beta cyclase, chloroplastic (LCY1) from Nicotiana tabacum (Common tobacco).